A 324-amino-acid chain; its full sequence is Sex-lethal homolog (324 aa).

RRM domains lie at 102-180 (TNLI…YARP) and 188-268 (TNLY…LAEE).

In terms of tissue distribution, expressed in somatic cells of both sexes throughout development, but not in the pole cells which are the progenitors of the germline.

The protein localises to the nucleus. Functionally, unknown; apparently not involved in somatic sex determination. In Musca domestica (House fly), this protein is Sex-lethal homolog (SXL).